Reading from the N-terminus, the 270-residue chain is Probable septum site-determining protein MinC (270 aa).

The protein belongs to the MinC family. As to quaternary structure, interacts with MinD and FtsZ.

In terms of biological role, cell division inhibitor that blocks the formation of polar Z ring septums. Rapidly oscillates between the poles of the cell to destabilize FtsZ filaments that have formed before they mature into polar Z rings. Prevents FtsZ polymerization. The protein is Probable septum site-determining protein MinC of Cupriavidus necator (strain ATCC 17699 / DSM 428 / KCTC 22496 / NCIMB 10442 / H16 / Stanier 337) (Ralstonia eutropha).